The primary structure comprises 197 residues: Lipid A acyltransferase PagP (197 aa).

The first 24 residues, Met1–Ala24, serve as a signal peptide directing secretion. Active-site residues include His69, Asp112, and Ser113.

Belongs to the lipid A palmitoyltransferase family. In terms of assembly, homodimer.

Its subcellular location is the cell outer membrane. It catalyses the reaction a lipid A + a 1,2-diacyl-sn-glycero-3-phosphocholine = a hepta-acyl lipid A + a 2-acyl-sn-glycero-3-phosphocholine. The enzyme catalyses a lipid IVA + a 1,2-diacyl-sn-glycero-3-phosphocholine = a lipid IVB + a 2-acyl-sn-glycero-3-phosphocholine. The catalysed reaction is a lipid IIA + a 1,2-diacyl-sn-glycero-3-phosphocholine = a lipid IIB + a 2-acyl-sn-glycero-3-phosphocholine. Functionally, transfers a fatty acid residue from the sn-1 position of a phospholipid to the N-linked hydroxyfatty acid chain on the proximal unit of lipid A or its precursors. The chain is Lipid A acyltransferase PagP from Serratia proteamaculans (strain 568).